A 110-amino-acid polypeptide reads, in one-letter code: uncharacterized protein (110 aa).

Positions 1 to 72 (MWRSSNQRGV…NHRNIHLRNP (72 aa)) are disordered. Residues 10–23 (VSRRRDKSMRKYTR) show a composition bias toward basic residues. A compositionally biased stretch (polar residues) spans 48 to 57 (KNTYTGNISS).

This is an uncharacterized protein from Human herpesvirus 6A (strain Uganda-1102) (HHV-6 variant A).